The primary structure comprises 209 residues: Orotate phosphoribosyltransferase (209 aa).

5-phospho-alpha-D-ribose 1-diphosphate-binding positions include Arg-96, Lys-100, His-102, and 122–130 (EDLISTGGS). Orotate is bound at residue Ser-126.

The protein belongs to the purine/pyrimidine phosphoribosyltransferase family. PyrE subfamily. As to quaternary structure, homodimer. The cofactor is Mg(2+).

It catalyses the reaction orotidine 5'-phosphate + diphosphate = orotate + 5-phospho-alpha-D-ribose 1-diphosphate. Its pathway is pyrimidine metabolism; UMP biosynthesis via de novo pathway; UMP from orotate: step 1/2. Functionally, catalyzes the transfer of a ribosyl phosphate group from 5-phosphoribose 1-diphosphate to orotate, leading to the formation of orotidine monophosphate (OMP). In Lactococcus lactis subsp. lactis (strain IL1403) (Streptococcus lactis), this protein is Orotate phosphoribosyltransferase.